Here is a 180-residue protein sequence, read N- to C-terminus: Cell number regulator 7 (180 aa).

Residues Ala80–Ser102 form a helical membrane-spanning segment.

It belongs to the cornifelin family. As to expression, expressed in roots, leaves, immature ears and silks. Detected preferentially in silks.

The protein resides in the membrane. This is Cell number regulator 7 (CNR7) from Zea mays (Maize).